Here is a 302-residue protein sequence, read N- to C-terminus: uncharacterized protein (302 aa).

The tract at residues 1 to 24 (MTEISELASSSQKPEKTKYNLPKP) is disordered.

This is an uncharacterized protein from Schizosaccharomyces pombe (strain 972 / ATCC 24843) (Fission yeast).